A 323-amino-acid chain; its full sequence is Movement protein (323 aa).

The stretch at serine 292–asparagine 322 forms a coiled coil.

This sequence belongs to the caulimoviridae movement protein family. Homotrimer, through the coiled-coil domain. Interacts with VAP.

It is found in the host cell junction. Its subcellular location is the host plasmodesma. Transports viral genome to neighboring plant cells directly through plasmosdesmata, without any budding. The movement protein allows efficient cell to cell propagation, by bypassing the host cell wall barrier. Acts by forming tubules structures that increase the size exclusion limit (SEL) of plasmodesmata, thereby allowing viral ribonucleocapsids to spread directly to neighboring cells. This is Movement protein from Figwort mosaic virus (strain DxS) (FMV).